The primary structure comprises 304 residues: Gamma-gliadin B-I (304 aa).

Positions 1-23 (MKTFLVFALIAVVATSAIAQMET) are cleaved as a signal peptide. Residues 32–92 (PWQQQPLPPQ…PFSQQQQPVL (61 aa)) are disordered. Residues 41–92 (QQSFSQQPPFSQQQQQPLPQQPSFSQQQPPFSQQQPILSQQPPFSQQQQPVL) are compositionally biased toward low complexity.

Belongs to the gliadin/glutenin family.

Gliadin is the major seed storage protein in wheat. In Triticum aestivum (Wheat), this protein is Gamma-gliadin B-I.